A 535-amino-acid chain; its full sequence is uncharacterized protein (535 aa).

Positions 1–34 (MKAIDNQIRNISSSHQDKHSDKVNSHQHHGKVDK) are disordered. Basic and acidic residues predominate over residues 15-34 (HQDKHSDKVNSHQHHGKVDK).

This is an uncharacterized protein from Escherichia coli (strain K12).